A 468-amino-acid polypeptide reads, in one-letter code: MPPKKHSGFMMFVNEWRDNNPEGRNLSIAQAVSRCGSIWEKMTAQQRGPYNSGAKNADVLTRVKKERLNCHGQVLSQVELEEREMAESQIHMKRCTERIVMDAKRSHDLENTKFVFVAFNYFTKAFTTDVYVPAEFSASEYSFNEGIMSVYSTLIDPGQIIFGQGSDAQHHSSTTHNLPLPPNALGEKNMGKLYRNILEYLSKIQEGKDATKPFVVFTKTDMVPFVKSCFRYLACENQDGSYENGDQIQVLDIQYLLFIQKKEVLDIAGVSDEKINLYVTDAYFLKDFFEFTPEISCQYHEENDRSKYCTQSLVMRWAYTFSDYMCSDLAISVQPGKHIPPKTKPNYRVIPANSSVHESSFDSFYSIPASCEKKEDSPTVLSPASSRRSLASSPYVPTDHTSFVGDLNKKDEFPSLDQRNKLAALIDLIQFFYRCPVQLCRPLFSAGYHLNDALEPPHDPRDLYGRPL.

Positions 2–69 (PPKKHSGFMM…LTRVKKERLN (68 aa)) form a DNA-binding region, HMG box. A disordered region spans residues 374-393 (KEDSPTVLSPASSRRSLASS). Residues 381–393 (LSPASSRRSLASS) are compositionally biased toward low complexity.

The protein belongs to the maelstrom family.

The protein resides in the cytoplasm. It is found in the nucleus. Involved both in the piRNA and miRNA metabolic processes. As a component of the meiotic nuage, plays a central role during oogenesis by repressing transposable elements and preventing their mobilization, which is essential for the germline integrity. Repression of transposable elements is mediated via the piRNA metabolic process, which mediates the repression of transposable elements during meiosis by forming complexes composed of piRNAs and Piwi proteins and governs the repression of transposons. As a nuclear component, it is required for proper differentiation in the germline stem cell (GSC) lineage by repressing microRNA-7 (miR-7), thereby acting as an indirect regulator of bag-of-marbles (Bam). Acts by binding to the promoter of miR-7 gene and repressing its expression; miR-7 repression alleviates the Bam repression by miR-7, thereby allowing differentiation in the germline stem cell (GSC) lineage. The polypeptide is Protein maelstrom 2 (mael2) (Drosophila ananassae (Fruit fly)).